The primary structure comprises 430 residues: NAD(P)(+) glycohydrolase toxin Tse6 (430 aa).

3 helical membrane-spanning segments follow: residues 17-37 (FGVAAMVAGAVAGALIGAAVV), 46-66 (LAAVILAGSIAAGGLSMFQIV), and 193-213 (LLLAAMAGVAALVGVVAIGGL).

As to quaternary structure, interacts with Tsi6, VgrG1a, EagT6 and EF-Tu.

Its subcellular location is the membrane. It catalyses the reaction NAD(+) + H2O = ADP-D-ribose + nicotinamide + H(+). Functionally, type VI secretion exported toxin that acts as a glycohydrolase on bacterial target cells and degrades the essential dinucleotides NAD(+) and NADP(+), thereby inducing bacteriostasis. The activity resides in the C-terminal region that is initially neutralized by the cognate immunity protein Tsi6. This is NAD(P)(+) glycohydrolase toxin Tse6 from Pseudomonas aeruginosa (strain ATCC 15692 / DSM 22644 / CIP 104116 / JCM 14847 / LMG 12228 / 1C / PRS 101 / PAO1).